The primary structure comprises 1778 residues: Ankyrin repeat domain-containing protein 36C (1778 aa).

5 ANK repeats span residues 64-93 (KERTALHLACATGQPEMVHLLVSRRCELNL), 97-126 (EDRTPLIKAVQLRQEACATLLLQNGADPNI), 130-159 (FGRTALHYAVYNEDTSMIEKLLSYGANIEE), 163-192 (DEYPPLFLAVSQRKVKMVEFLLKKKANINA), and 196-225 (LGRSALIHAVTLGEKDIVILLLQHNIDVFS). Disordered stretches follow at residues 260 to 365 (LSIN…DEQK), 501 to 526 (ALPATGQKANVSPEQPPLFTHTVKDS), 538 to 653 (DSLT…QKQS), 671 to 1027 (RITG…QKQL), and 1051 to 1072 (IRGTVSSQRQPALKATGDEKDS). Polar residues-rich tracts occupy residues 261-272 (SINSNPVSSQKQ) and 297-306 (KSGTVSSQKQ). Positions 539–555 (SLTSSEESSERPPLSTL) are enriched in low complexity. Basic and acidic residues-rich tracts occupy residues 585–596 (PAEKATSDDKDS) and 619–630 (PAEKATSDEKDS). Polar residues-rich tracts occupy residues 631-653 (VSNIATEIKEGQQSGTVSPQKQS) and 679-691 (GTVSSQKQPPSKA). A compositionally biased stretch (basic and acidic residues) spans 794 to 813 (TSDEKDSFSNITREKKDGEI). A Phosphoserine modification is found at S829. Composition is skewed to basic and acidic residues over residues 840–849 (RGKEDGEKTR) and 862–881 (TSDEKDSFSNITREKKDGET). S897 is subject to Phosphoserine. A compositionally biased stretch (basic and acidic residues) spans 907-917 (AREKKDGEKSR). The span at 942 to 955 (RGKKHGEKTRRVSS) shows a compositional bias: basic residues. Polar residues-rich tracts occupy residues 983 to 992 (ISGTVSSQKQ) and 1005 to 1026 (VSNIPTEIKDGQQSGTVSSQKQ). Coiled coils occupy residues 1157 to 1187 (EQDLEMASEGEQKRLEEYENNQPQVKNQIHS), 1247 to 1333 (ELKD…YRIE), 1362 to 1480 (SETD…DHDQ), and 1544 to 1768 (VFEH…ILQH).

Belongs to the ANKRD36 family.

The polypeptide is Ankyrin repeat domain-containing protein 36C (ANKRD36C) (Homo sapiens (Human)).